We begin with the raw amino-acid sequence, 341 residues long: Galactofuranose transporter permease protein YtfT (341 aa).

Residues 1-25 lie on the Cytoplasmic side of the membrane; it reads MMPQSLPDTTTPKRRFRWPTGMPQL. The helical transmembrane segment at 26-46 threads the bilayer; the sequence is VALLLVLLVDSLVAPHFWQVV. The Periplasmic portion of the chain corresponds to 47–65; that stretch reads LQDGRLFGSPIDILNRAAP. Transmembrane regions (helical) follow at residues 66 to 86 and 87 to 107; these read VALL…DLSV and GAVM…GFSL. Position 108 (P108) is a topological domain, periplasmic. A helical transmembrane segment spans residues 109-129; that stretch reads IVLLSALGTGILAGLWNGILV. Topologically, residues 130 to 136 are cytoplasmic; that stretch reads AILKIQP. A helical membrane pass occupies residues 137–157; it reads FVATLILMVAGRGVAQLITAG. Residues 158–174 are Periplasmic-facing; sequence QIVTFNSPDLSWFGSGS. The chain crosses the membrane as a helical span at residues 175–195; that stretch reads LLFLPTPVIIAVLTLILFWLL. The Cytoplasmic portion of the chain corresponds to 196–223; that stretch reads TRKTALGMFIEAVGINIRAAKNAGVNTR. Residues 224 to 244 form a helical membrane-spanning segment; the sequence is IIVMLTYVLSGLCAAIAGIIV. At 245 to 255 the chain is on the periplasmic side; that stretch reads AADIRGADANN. The helical transmembrane segment at 256–276 threads the bilayer; that stretch reads AGLWLELDAILAVVIGGGSLM. At 277–281 the chain is on the cytoplasmic side; that stretch reads GGRFN. 2 helical membrane-spanning segments follow: residues 282-302 and 303-323; these read LLLS…ILLS and GFPP…VLIV. Topologically, residues 324 to 341 are cytoplasmic; sequence QSQRFISLIKGVRSRDKT.

Belongs to the binding-protein-dependent transport system permease family. AraH/RbsC subfamily. The complex is composed of two ATP-binding proteins (YtfR), two transmembrane proteins (YtfT and YjfF) and a solute-binding protein (YtfQ).

Its subcellular location is the cell inner membrane. In terms of biological role, part of the ABC transporter complex YtfQRT-YjfF involved in galactofuranose transport. Probably responsible for the translocation of the substrate across the membrane. In Escherichia coli (strain K12), this protein is Galactofuranose transporter permease protein YtfT (ytfT).